Consider the following 370-residue polypeptide: tRNA/tmRNA (uracil-C(5))-methyltransferase (370 aa).

Positions 195, 221, 226, 242, and 302 each coordinate S-adenosyl-L-methionine. The active-site Nucleophile is cysteine 327. The Proton acceptor role is filled by glutamate 361.

The protein belongs to the class I-like SAM-binding methyltransferase superfamily. RNA M5U methyltransferase family. TrmA subfamily.

The catalysed reaction is uridine(54) in tRNA + S-adenosyl-L-methionine = 5-methyluridine(54) in tRNA + S-adenosyl-L-homocysteine + H(+). It catalyses the reaction uridine(341) in tmRNA + S-adenosyl-L-methionine = 5-methyluridine(341) in tmRNA + S-adenosyl-L-homocysteine + H(+). Dual-specificity methyltransferase that catalyzes the formation of 5-methyluridine at position 54 (m5U54) in all tRNAs, and that of position 341 (m5U341) in tmRNA (transfer-mRNA). This is tRNA/tmRNA (uracil-C(5))-methyltransferase from Wolinella succinogenes (strain ATCC 29543 / DSM 1740 / CCUG 13145 / JCM 31913 / LMG 7466 / NCTC 11488 / FDC 602W) (Vibrio succinogenes).